The chain runs to 429 residues: tRNA-2-methylthio-N(6)-dimethylallyladenosine synthase (429 aa).

The 110-residue stretch at Met-1 to Lys-110 folds into the MTTase N-terminal domain. [4Fe-4S] cluster-binding residues include Cys-10, Cys-46, Cys-75, Cys-146, Cys-150, and Cys-153. Residues Arg-132 to Leu-364 enclose the Radical SAM core domain. One can recognise a TRAM domain in the interval Glu-366–Lys-427.

The protein belongs to the methylthiotransferase family. MiaB subfamily. Monomer. Requires [4Fe-4S] cluster as cofactor.

The protein localises to the cytoplasm. The enzyme catalyses N(6)-dimethylallyladenosine(37) in tRNA + (sulfur carrier)-SH + AH2 + 2 S-adenosyl-L-methionine = 2-methylsulfanyl-N(6)-dimethylallyladenosine(37) in tRNA + (sulfur carrier)-H + 5'-deoxyadenosine + L-methionine + A + S-adenosyl-L-homocysteine + 2 H(+). In terms of biological role, catalyzes the methylthiolation of N6-(dimethylallyl)adenosine (i(6)A), leading to the formation of 2-methylthio-N6-(dimethylallyl)adenosine (ms(2)i(6)A) at position 37 in tRNAs that read codons beginning with uridine. The sequence is that of tRNA-2-methylthio-N(6)-dimethylallyladenosine synthase from Thermosipho africanus (strain TCF52B).